Here is a 120-residue protein sequence, read N- to C-terminus: Large ribosomal subunit protein bL19 (120 aa).

It belongs to the bacterial ribosomal protein bL19 family.

In terms of biological role, this protein is located at the 30S-50S ribosomal subunit interface and may play a role in the structure and function of the aminoacyl-tRNA binding site. The chain is Large ribosomal subunit protein bL19 from Thermodesulfovibrio yellowstonii (strain ATCC 51303 / DSM 11347 / YP87).